A 268-amino-acid polypeptide reads, in one-letter code: Ribosomal RNA small subunit methyltransferase A (268 aa).

The S-adenosyl-L-methionine site is built by asparagine 23, leucine 25, glycine 50, glutamate 72, aspartate 94, and asparagine 116.

It belongs to the class I-like SAM-binding methyltransferase superfamily. rRNA adenine N(6)-methyltransferase family. RsmA subfamily.

It localises to the cytoplasm. It carries out the reaction adenosine(1518)/adenosine(1519) in 16S rRNA + 4 S-adenosyl-L-methionine = N(6)-dimethyladenosine(1518)/N(6)-dimethyladenosine(1519) in 16S rRNA + 4 S-adenosyl-L-homocysteine + 4 H(+). In terms of biological role, specifically dimethylates two adjacent adenosines (A1518 and A1519) in the loop of a conserved hairpin near the 3'-end of 16S rRNA in the 30S particle. May play a critical role in biogenesis of 30S subunits. This Mycoplasmoides gallisepticum (strain R(low / passage 15 / clone 2)) (Mycoplasma gallisepticum) protein is Ribosomal RNA small subunit methyltransferase A.